A 243-amino-acid polypeptide reads, in one-letter code: Pyridoxine 5'-phosphate synthase (243 aa).

3-amino-2-oxopropyl phosphate is bound at residue N9. Position 11–12 (11–12 (DH)) interacts with 1-deoxy-D-xylulose 5-phosphate. R20 contacts 3-amino-2-oxopropyl phosphate. The active-site Proton acceptor is H45. The 1-deoxy-D-xylulose 5-phosphate site is built by R47 and H52. The active-site Proton acceptor is E72. Residue T102 participates in 1-deoxy-D-xylulose 5-phosphate binding. The Proton donor role is filled by H193. 3-amino-2-oxopropyl phosphate is bound by residues G194 and 215 to 216 (GH).

This sequence belongs to the PNP synthase family. In terms of assembly, homooctamer; tetramer of dimers.

The protein resides in the cytoplasm. The enzyme catalyses 3-amino-2-oxopropyl phosphate + 1-deoxy-D-xylulose 5-phosphate = pyridoxine 5'-phosphate + phosphate + 2 H2O + H(+). It participates in cofactor biosynthesis; pyridoxine 5'-phosphate biosynthesis; pyridoxine 5'-phosphate from D-erythrose 4-phosphate: step 5/5. Its function is as follows. Catalyzes the complicated ring closure reaction between the two acyclic compounds 1-deoxy-D-xylulose-5-phosphate (DXP) and 3-amino-2-oxopropyl phosphate (1-amino-acetone-3-phosphate or AAP) to form pyridoxine 5'-phosphate (PNP) and inorganic phosphate. The sequence is that of Pyridoxine 5'-phosphate synthase from Escherichia coli O157:H7.